The primary structure comprises 217 residues: 3,4-dihydroxy-2-butanone 4-phosphate synthase (217 aa).

Residues 37 to 38 (RE), D42, 150 to 154 (RQGHT), and E174 each bind D-ribulose 5-phosphate. Mg(2+) is bound at residue E38. Residue H153 coordinates Mg(2+).

This sequence belongs to the DHBP synthase family. In terms of assembly, homodimer. Requires Mg(2+) as cofactor. It depends on Mn(2+) as a cofactor.

The enzyme catalyses D-ribulose 5-phosphate = (2S)-2-hydroxy-3-oxobutyl phosphate + formate + H(+). Its pathway is cofactor biosynthesis; riboflavin biosynthesis; 2-hydroxy-3-oxobutyl phosphate from D-ribulose 5-phosphate: step 1/1. In terms of biological role, catalyzes the conversion of D-ribulose 5-phosphate to formate and 3,4-dihydroxy-2-butanone 4-phosphate. The protein is 3,4-dihydroxy-2-butanone 4-phosphate synthase of Photorhabdus laumondii subsp. laumondii (strain DSM 15139 / CIP 105565 / TT01) (Photorhabdus luminescens subsp. laumondii).